A 377-amino-acid chain; its full sequence is MSEQDSSSPKYMRFLLGNFTSAEMVTDGNFLIYCIEMGLLVIGVLENIFMIGAVFSTSCLHLNLRILICNCCLGFILMAVGRAMIAVPLCIAHLRDVDISSHAWCFIANAVHHSSADSVCLSFVFIMLERTAGTIWSKDYEKTKIHIFPCIFAFLQWFIPMFMILGNFLDRANRMEHFLLYPHLPCQIEYLTPTMFMITIFIIVIGFIASVGGITIVYNKNIKKYNTRDIWFNTVNLSERYQITENIRSTHLLFPLLALMLIFSTLSVSVLIYGGYWVSVMTKEPARFEEVVKWFGRGGEAAQLFDIITAIYTISFPICAFICHPNLFRFLRKFIGWNSYAVRPSNLNEIGGFEMSTAPIRTQTEFHFQELSRQWNT.

Over Met-1–Cys-34 the chain is Extracellular. An N-linked (GlcNAc...) asparagine glycan is attached at Asn-18. A helical membrane pass occupies residues Ile-35–Phe-55. Residues Ser-56 to Cys-71 are Cytoplasmic-facing. A helical transmembrane segment spans residues Cys-72–Ala-92. The Extracellular segment spans residues His-93–Cys-105. Residues Phe-106–Ile-126 traverse the membrane as a helical segment. Residues Met-127 to Lys-144 are Cytoplasmic-facing. The helical transmembrane segment at Ile-145 to Leu-165 threads the bilayer. Topologically, residues Gly-166–Met-195 are extracellular. Residues Phe-196–Ile-216 traverse the membrane as a helical segment. Over Val-217 to His-251 the chain is Cytoplasmic. Residues Leu-252–Ile-272 traverse the membrane as a helical segment. Topologically, residues Tyr-273–Gln-303 are extracellular. Residues Leu-304 to His-324 form a helical membrane-spanning segment. The Cytoplasmic segment spans residues Pro-325 to Thr-377.

Belongs to the G-protein coupled receptor 1 family.

It is found in the cell membrane. The sequence is that of Probable G-protein coupled receptor F27E5.8 from Caenorhabditis elegans.